Consider the following 401-residue polypeptide: MSLVSQARSLGKYFLLFDNLLVVLGFFVVFPLISIHFVEQLGWAALVVGFALGLRQFVQQGLGIFGGAIADRFGAKPMIVTGMLLRALGFAFIALATEPWILWLACILSALGGTLFDPPRTALVIKLTRPHERGRFFSLLLMQDSAGAVIGALIGSWLLQYDFQFVCWTGAGVFVLAAIWNALFLPAYRISTTRTPIWEGMERVIKDRRFFTYVLTLTGYFMLSVQVMLMFPIIVNEIAGTPAAVKWMYAIEATLSLTLLYPIARWSEKRFRLEQRLMAGLFLMSLSMFPVGLIGEINTLFGLICLFYLGTVTAEPARETLSASLADPRARGSYMGFSRLGLALGGALGYTGGGWLYDTGHALNIPQLPWFLLGIIGLITLYALHRQFNQRKIESAMLSGN.

Helical transmembrane passes span 13 to 33 (YFLL…FPLI), 34 to 54 (SIHF…ALGL), 78 to 95 (MIVT…FIAL), 99 to 116 (PWIL…GTLF), 139 to 159 (LLLM…SWLL), 165 to 185 (FVCW…ALFL), 214 to 234 (VLTL…FPII), 243 to 263 (AAVK…LYPI), 289 to 309 (FPVG…LFYL), 340 to 360 (LGLA…YDTG), and 365 to 385 (IPQL…YALH).

The protein belongs to the major facilitator superfamily. DHA1 family. MdtH (TC 2.A.1.2.21) subfamily.

It is found in the cell inner membrane. The polypeptide is Multidrug resistance protein MdtH (Photorhabdus laumondii subsp. laumondii (strain DSM 15139 / CIP 105565 / TT01) (Photorhabdus luminescens subsp. laumondii)).